The chain runs to 130 residues: Small ribosomal subunit protein uS9 (130 aa).

This sequence belongs to the universal ribosomal protein uS9 family.

The chain is Small ribosomal subunit protein uS9 from Syntrophobacter fumaroxidans (strain DSM 10017 / MPOB).